Reading from the N-terminus, the 133-residue chain is Large ribosomal subunit protein bL17 (133 aa).

The protein belongs to the bacterial ribosomal protein bL17 family. In terms of assembly, part of the 50S ribosomal subunit. Contacts protein L32.

In Nitratidesulfovibrio vulgaris (strain ATCC 29579 / DSM 644 / CCUG 34227 / NCIMB 8303 / VKM B-1760 / Hildenborough) (Desulfovibrio vulgaris), this protein is Large ribosomal subunit protein bL17.